Consider the following 149-residue polypeptide: uncharacterized protein (149 aa).

The protein to B.subtilis XkdN.

This is an uncharacterized protein from Bacillus subtilis (strain 168).